The sequence spans 254 residues: (2Z,6E)-farnesyl diphosphate synthase (254 aa).

Asp-34 is a catalytic residue. Asp-34 provides a ligand contact to Mg(2+). Substrate-binding positions include 35–38 (GNRR), Trp-39, His-52, and 80–82 (STD). Catalysis depends on Asn-83, which acts as the Proton acceptor. Residues Arg-86, Arg-203, and 209–211 (RLS) contribute to the substrate site. Glu-222 is a binding site for Mg(2+).

It belongs to the UPP synthase family. Z-FPP synthase subfamily. Homodimer. Mg(2+) serves as cofactor.

The enzyme catalyses isopentenyl diphosphate + (2E)-geranyl diphosphate = (2Z,6E)-farnesyl diphosphate + diphosphate. Its function is as follows. Catalyzes the condensation of only one isopentenyl pyrophosphate (IPP) unit in the cis configuration to E-geranyl diphosphate (E-GPP) generating the 15 carbon product (2Z,6E)-farnesyl diphosphate (Z-FPP or EZ-FPP). Only geranyl diphosphate (GPP) can be used as isoprenyl acceptor. In Thermobifida fusca (strain YX), this protein is (2Z,6E)-farnesyl diphosphate synthase.